The primary structure comprises 192 residues: Interleukin-18 (192 aa).

Positions 1–35 (MAAEPEDNCISFVEMKFINNTLYFVAENDEDLESD) are excised as a propeptide.

This sequence belongs to the IL-1 family. In terms of assembly, forms a ternary complex with ligand-binding receptor subunit IL18R1 and signaling receptor subunit IL18RAP at the plasma membrane. Mature IL18 first binds to IL18R1 forming a low affinity binary complex, which then interacts with IL18RAP to form a high affinity ternary complex that signals inside the cell. Interacts with cargo receptor TMED10; the interaction mediates the translocation from the cytoplasm into the ERGIC (endoplasmic reticulum-Golgi intermediate compartment) and thereby secretion. In terms of processing, the pro-IL-18 precursor is processed by CASP1, CASP4 or CASP5 to yield its mature, active form. The pro-IL-18 precursor features autoinhibitory interactions between the propeptide and the post-cleavage-site region, preventing recognition by the IL18R1 receptor. Processing by CASP1, CASP4 or CASP5 induces conformational changes to generate critical receptor-binding sites. The mature form is then secreted and released in the extracellular milieu by passing through the gasdermin-D (GSDMD) pore. In contrast, cleavage by CASP3 inactivates IL18.

The protein localises to the cytoplasm. Its subcellular location is the cytosol. The protein resides in the secreted. Its function is as follows. Pro-inflammatory cytokine primarily involved in epithelial barrier repair, polarized T-helper 1 (Th1) cell and natural killer (NK) cell immune responses. Upon binding to IL18R1 and IL18RAP, forms a signaling ternary complex which activates NF-kappa-B, triggering synthesis of inflammatory mediators. Synergizes with IL12/interleukin-12 to induce IFNG synthesis from T-helper 1 (Th1) cells and natural killer (NK) cells. Involved in transduction of inflammation downstream of pyroptosis: its mature form is specifically released in the extracellular milieu by passing through the gasdermin-D (GSDMD) pore. This Sus scrofa (Pig) protein is Interleukin-18 (IL18).